The chain runs to 351 residues: UDP-3-O-acylglucosamine N-acyltransferase 1 (351 aa).

Residue His237 is the Proton acceptor of the active site.

It belongs to the transferase hexapeptide repeat family. LpxD subfamily. As to quaternary structure, homotrimer.

The enzyme catalyses a UDP-3-O-[(3R)-3-hydroxyacyl]-alpha-D-glucosamine + a (3R)-hydroxyacyl-[ACP] = a UDP-2-N,3-O-bis[(3R)-3-hydroxyacyl]-alpha-D-glucosamine + holo-[ACP] + H(+). It functions in the pathway bacterial outer membrane biogenesis; LPS lipid A biosynthesis. Its function is as follows. Catalyzes the N-acylation of UDP-3-O-acylglucosamine using 3-hydroxyacyl-ACP as the acyl donor. Is involved in the biosynthesis of lipid A, a phosphorylated glycolipid that anchors the lipopolysaccharide to the outer membrane of the cell. This chain is UDP-3-O-acylglucosamine N-acyltransferase 1, found in Legionella pneumophila (strain Paris).